We begin with the raw amino-acid sequence, 147 residues long: Histone-lysine N-methyltransferase, H3 lysine-37 specific (147 aa).

In terms of domain architecture, SET spans 8-116 (SPLEIRDTER…TNEELCISYG (109 aa)).

Belongs to the class V-like SAM-binding methyltransferase superfamily. In terms of assembly, homodimer.

The protein localises to the cytoplasm. Its subcellular location is the nucleus. The catalysed reaction is L-lysyl(37)-[histone H3] + S-adenosyl-L-methionine = N(6)-methyl-L-lysyl(37)-[histone H3] + S-adenosyl-L-homocysteine + H(+). The enzyme catalyses N(6)-methyl-L-lysyl(37)-[histone H3] + S-adenosyl-L-methionine = N(6),N(6)-dimethyl-L-lysyl(37)-[histone H3] + S-adenosyl-L-homocysteine + H(+). It carries out the reaction N(6),N(6)-dimethyl-L-lysyl(37)-[histone H3] + S-adenosyl-L-methionine = N(6),N(6),N(6)-trimethyl-L-lysyl(37)-[histone H3] + S-adenosyl-L-homocysteine + H(+). Histone lysine methyltransferase that specifically mono-, di-, and trimethylates 'Lys-37' of histone H3 to regulate sporulation. The chain is Histone-lysine N-methyltransferase, H3 lysine-37 specific from Schizosaccharomyces pombe (strain 972 / ATCC 24843) (Fission yeast).